The following is a 131-amino-acid chain: MVYESGFTTRRTYSSRPVTTSYAVTTPRLDLCTDRPGSHRSRASSDYSYTSKSSVEKSSYDSSNPHSYRPERSTYTSTVEKTSRSGPGGSYNYSTERTSTTGAGPGGYSYSSTTSGNLPGGTKYRHFSYHV.

Residues 1 to 24 show a composition bias toward polar residues; it reads MVYESGFTTRRTYSSRPVTTSYAV. The disordered stretch occupies residues 1 to 121; it reads MVYESGFTTR…STTSGNLPGG (121 aa). Composition is skewed to low complexity over residues 44 to 53 and 98 to 116; these read SSDYSYTSKS and TSTTGAGPGGYSYSSTTSG.

In terms of tissue distribution, concentrated in lamina neurons, first optic lobe neurons and cortical neurons of central brain.

Its function is as follows. Plays an important role in the regulation of tissue responsiveness to oxygen deprivation. The protein is Protein anoxia up-regulated of Drosophila melanogaster (Fruit fly).